The following is a 754-amino-acid chain: C2H2 finger domain transcription factor crzA (754 aa).

Disordered stretches follow at residues 1–51 (MASQ…TVTG), 63–150 (SFAN…FSDL), 187–227 (VHQQ…QGST), 269–299 (QGHRRAPSEVSEISSAAPSPYLSQHESFDGV), and 384–543 (GAEG…RVQK). Low complexity predominate over residues 30 to 44 (HQQQQQQQHQQHQGQ). 2 stretches are compositionally biased toward polar residues: residues 63 to 80 (SFANSSFDPNSNNVSPSA) and 94 to 114 (TPASQTDQNYANSLQIPQSYG). A compositionally biased stretch (low complexity) spans 130-140 (QQQSQQQHHQQ). A compositionally biased stretch (polar residues) spans 141–150 (PSLDDNFSDL). A compositionally biased stretch (low complexity) spans 189-209 (QQSHPTQIPSSHSSTSPQISP). Polar residues-rich tracts occupy residues 210 to 227 (LEQQQHSSPGPMSTQGST) and 279 to 293 (SEISSAAPSPYLSQH). Composition is skewed to low complexity over residues 459-472 (STSRLRSSSTSSSL) and 491-515 (RQQQSNPSSRDPSPSRSNRRLSTSS). 2 consecutive C2H2-type zinc fingers follow at residues 548-570 (FQCNLCPKRFTRAYNLRSHLRTH) and 576-598 (FVCTVCGKAFARQHDRKRHEGLH). The C2H2-type 3; degenerate zinc finger occupies 604–635 (FVCQGELSRGGQWGCGRRFARADALGRHFRSE). The interval 708–737 (ADDPSDIGGRSSFDASSGNEFGFEDDDSGL) is disordered.

Its subcellular location is the nucleus. The protein localises to the cytoplasm. Functionally, transcription factor involved in the regulation of calcium ion homeostasis. Regulates genes encoding calcium transporters, transcription factors and genes that could be directly or indirectly involved in calcium metabolism. Supports especially pmcA, pmcB and pmcC expression encoding for calcium-translocating P-type ATPases. Binds target promoters at motif A[GT][CG]CA[AC][AG]. Plays an essential role germination, radial growth, and asexual development. Also plays a major role in proper chitin and glucan incorporation into the cell wall. Involved in the high-osmolarity glycerol response (HOG) signaling pathway. Required for pathogenicity in an experimental murine model of invasive pulmonary aspergillosis. The sequence is that of C2H2 finger domain transcription factor crzA from Aspergillus fumigatus (strain ATCC MYA-4609 / CBS 101355 / FGSC A1100 / Af293) (Neosartorya fumigata).